The following is a 621-amino-acid chain: 1-deoxy-D-xylulose-5-phosphate synthase (621 aa).

Thiamine diphosphate-binding positions include histidine 80 and glycine 121–serine 123. Mg(2+) is bound at residue aspartate 152. Residues glycine 153–alanine 154, asparagine 181, tyrosine 288, and glutamate 371 each bind thiamine diphosphate. Asparagine 181 is a Mg(2+) binding site.

It belongs to the transketolase family. DXPS subfamily. As to quaternary structure, homodimer. Mg(2+) is required as a cofactor. The cofactor is thiamine diphosphate.

The enzyme catalyses D-glyceraldehyde 3-phosphate + pyruvate + H(+) = 1-deoxy-D-xylulose 5-phosphate + CO2. Its pathway is metabolic intermediate biosynthesis; 1-deoxy-D-xylulose 5-phosphate biosynthesis; 1-deoxy-D-xylulose 5-phosphate from D-glyceraldehyde 3-phosphate and pyruvate: step 1/1. Functionally, catalyzes the acyloin condensation reaction between C atoms 2 and 3 of pyruvate and glyceraldehyde 3-phosphate to yield 1-deoxy-D-xylulose-5-phosphate (DXP). The protein is 1-deoxy-D-xylulose-5-phosphate synthase of Pectobacterium atrosepticum (strain SCRI 1043 / ATCC BAA-672) (Erwinia carotovora subsp. atroseptica).